Reading from the N-terminus, the 1029-residue chain is Cilia- and flagella-associated protein 91 (1029 aa).

Disordered stretches follow at residues 72 to 97 (NYRP…GPNR) and 117 to 170 (PPSQ…PWEP). Positions 272 to 299 (LELLDNALQVREEELDDENRLRVEARKE) form a coiled coil. The span at 837–854 (ENQDQQEPQPQPQPSSSS) shows a compositional bias: low complexity. 2 disordered regions span residues 837-861 (ENQD…DLAD) and 876-1029 (GEPS…EAAE). The segment covering 890-910 (QQLEADAEAEAEAEAEAEAGA) has biased composition (acidic residues). Residues 911-921 (EAEASAQAGAE) show a composition bias toward low complexity. Positions 922-932 (AEAEAGVEAEA) are enriched in acidic residues. The segment covering 933-944 (EASAGAEASVGA) has biased composition (low complexity). Over residues 964–982 (PEAEAEAEAGAEAEAENGA) the composition is skewed to acidic residues. Over residues 984–999 (AEARLGGEEEGFREGE) the composition is skewed to basic and acidic residues. The span at 1000–1015 (GQGGAAAGEAGPGGEL) shows a compositional bias: gly residues. Positions 1016 to 1029 (AEGEGEAGEGEAAE) are enriched in acidic residues.

This sequence belongs to the CFAP91 family. As to quaternary structure, identified in a spoke-associated complex containing CFAP61, CFAP91 and CFAP251; the complex is associated with the radial spokes of the axoneme. The complex associates with Calmodulin; the association is calcium sensitive. Interacts with RSP3.

Its subcellular location is the cytoplasm. The protein resides in the cytoskeleton. It localises to the flagellum axoneme. As component of a spoke-associated complex, regulates flagellar dynein activity by mediating regulatory signals between the radial spokes and dynein arms. The polypeptide is Cilia- and flagella-associated protein 91 (Chlamydomonas reinhardtii (Chlamydomonas smithii)).